Consider the following 432-residue polypeptide: Glutamyl-tRNA reductase (432 aa).

Substrate-binding positions include 49-52 (TCNR), serine 109, 114-116 (EGQ), and glutamine 120. Cysteine 50 functions as the Nucleophile in the catalytic mechanism. 189–194 (GAGKMS) provides a ligand contact to NADP(+).

It belongs to the glutamyl-tRNA reductase family. As to quaternary structure, homodimer.

It carries out the reaction (S)-4-amino-5-oxopentanoate + tRNA(Glu) + NADP(+) = L-glutamyl-tRNA(Glu) + NADPH + H(+). It participates in porphyrin-containing compound metabolism; protoporphyrin-IX biosynthesis; 5-aminolevulinate from L-glutamyl-tRNA(Glu): step 1/2. The protein operates within porphyrin-containing compound metabolism; chlorophyll biosynthesis. Catalyzes the NADPH-dependent reduction of glutamyl-tRNA(Glu) to glutamate 1-semialdehyde (GSA). This chain is Glutamyl-tRNA reductase, found in Cyanothece sp. (strain PCC 7425 / ATCC 29141).